Consider the following 534-residue polypeptide: MLCYLLIHILCLQAVLGVPYDVLPLRIPALVPKDTSLLSGRGAFQQLIDHTNLDVGTFSQSYWFNTTYWGGPGSPIIFYTPGQHAATDRLHYLTDTTLPGLVAKEVRGAVVLVEHRYFGESQPFSNLSTANLQYLTLDQVLADFVHFARTVDLPFDLSGQSHPSRAPWIWIGNSYSAALVAWTEKLIPNVFWAYYASGAMVNCMQDFWQFNYPTQQGMPQDCRYSLEAIISHVDSVFLSGSPEQKHRLKTRFGLQDLDRLDDTASALSRPVIAWTLIQPSDTHAQFFEMCDAIGNLNSSWSRGHKVGSEINLQKALGNYANWFTTSYLPGLCESSGYSDWAGRNNVQCLDTANPSWQAFHDLAVQNEDRVWDWMICNFFLLWQTGAPVSRPTIFSRLVDSMYYKRRCKLIFPEEENVTYAARVTDDSINTLTGGWNHTGKRILFTNGEFDPWRSASVSSVFRPDGPMQSTSQQPIILIKGVQHQADMYVRNRINKDVREAMDTGIAQISRWVLDFHVEKSKTLTQYTSQVYCAH.

The first 17 residues, 1-17 (MLCYLLIHILCLQAVLG), serve as a signal peptide directing secretion. 2 N-linked (GlcNAc...) asparagine glycosylation sites follow: N65 and N126. Catalysis depends on S174, which acts as the Charge relay system. Residues N297, N416, and N436 are each glycosylated (N-linked (GlcNAc...) asparagine). D450 serves as the catalytic Charge relay system.

It belongs to the peptidase S28 family.

It functions in the pathway mycotoxin biosynthesis. In terms of biological role, serine protease, part of the gene cluster that mediates the biosynthesis of the secondary metabolite victorin, the molecular basis for Victoria blight of oats. Within the pathway, vicPa and vicPb are probably involved in the processing of the vicA1 and vicA2 precursors. The pathway starts with the processing of the precursor vicA1 by several endopeptidases including kexin proteases as well as the cluster-specific S28 family peptidases vicPa and vicPb to produce 7 identical copies of the hexapeptide Gly-Leu-Lys-Leu-Ala-Phe. After being excised from the precursor peptide, the core peptides are cyclized and modified post-translationally by enzymes encoded within the gene cluster. The ustYa family oxidase vicYb is required for the formation of the macrocycle in victorin and the copper amine oxidases (CAOs) vicK1 and vicK2 are responsible for converting victorin to the active form by oxidizing the N-terminal glycyl residue in the peptides to glyoxylate. Relaxed substrate specificity of enzymes in the victorin biosynthetic pathway results in a metabolic grid that produces a set of analogs including victorinines B, C, E or HV-toxin M. The chain is Serine protease vicPa from Bipolaris victoriae (strain FI3) (Victoria blight of oats agent).